The chain runs to 79 residues: Mycoredoxin 1 (79 aa).

Residues 1–79 form the Glutaredoxin domain; sequence MSNVTIYATD…EVIAKIEALA (79 aa).

It belongs to the glutaredoxin family.

Its subcellular location is the cytoplasm. The enzyme catalyses [mycoredoxin]-L-cysteine + arseno-mycothiol + H(+) = [mycoredoxin]-S-mycothiol-L-cysteine + arsenite. Its function is as follows. Involved in defense against toxic arsenate. Involved in the mycothiol/myoredoxin redox pathway which uses a mycothioltransferase mechanism; functions as a monothiol mixed disulfide reductase and is recycled by a second mycothiol forming mycothione which in turn is reduced in a NADPH-dependent manner. The polypeptide is Mycoredoxin 1 (mrx1) (Corynebacterium glutamicum (strain ATCC 13032 / K051)).